Consider the following 537-residue polypeptide: 5,6-dihydroxyindole-2-carboxylic acid oxidase (537 aa).

The first 24 residues, 1–24 (MKSPTLLSLGYMFLVLLFFQQAWA), serve as a signal peptide directing secretion. Residues 25-477 (QFPRECATIE…WPSRSFSISE (453 aa)) are Lumenal, melanosome-facing. Disulfide bonds link C30–C41, C42–C65, C56–C99, C101–C110, and C113–C122. N96 and N104 each carry an N-linked (GlcNAc...) asparagine glycan. Residue N181 is glycosylated (N-linked (GlcNAc...) asparagine). H192, H215, and H224 together coordinate Zn(2+). 2 disulfides stabilise this stretch: C258/C261 and C290/C303. Residues N304 and N350 are each glycosylated (N-linked (GlcNAc...) asparagine). Zn(2+) contacts are provided by H377 and H381. N-linked (GlcNAc...) asparagine glycosylation is present at N385. A Zn(2+)-binding site is contributed by H404. A helical membrane pass occupies residues 478–501 (IVTIAVVAALSLVAVIFAGASCLI). At 502-537 (RARSNMDEANQPLLTDQYQHYIEEYEKIHNPNQSVV) the chain is on the cytoplasmic side.

Belongs to the tyrosinase family. Monomer. Interacts with ATP7A. Interacts with SLC45A2. Cu(2+) is required as a cofactor. The cofactor is Zn(2+). Post-translationally, glycosylated.

It localises to the melanosome membrane. The catalysed reaction is 2 5,6-dihydroxyindole-2-carboxylate + O2 = 2 indole-5,6-quinone-2-carboxylate + 2 H2O. Its pathway is pigment biosynthesis; melanin biosynthesis. Plays a role in melanin biosynthesis. Catalyzes the oxidation of 5,6-dihydroxyindole-2-carboxylic acid (DHICA) into indole-5,6-quinone-2-carboxylic acid. May regulate or influence the type of melanin synthesized. Also to a lower extent, capable of hydroxylating tyrosine and producing melanin. This is 5,6-dihydroxyindole-2-carboxylic acid oxidase (TYRP1) from Bos taurus (Bovine).